The chain runs to 200 residues: Prolactin-2 (200 aa).

Residues 1–23 (MRQRRISGSNLMMVLCVVAMCRA) form the signal peptide. 2 cysteine pairs are disulfide-bonded: C64–C173 and C190–C200.

Belongs to the somatotropin/prolactin family.

It is found in the secreted. The protein is Prolactin-2 (prl2) of Oreochromis mossambicus (Mozambique tilapia).